A 186-amino-acid chain; its full sequence is ATP synthase subunit delta (186 aa).

This sequence belongs to the ATPase delta chain family. In terms of assembly, F-type ATPases have 2 components, F(1) - the catalytic core - and F(0) - the membrane proton channel. F(1) has five subunits: alpha(3), beta(3), gamma(1), delta(1), epsilon(1). F(0) has three main subunits: a(1), b(2) and c(10-14). The alpha and beta chains form an alternating ring which encloses part of the gamma chain. F(1) is attached to F(0) by a central stalk formed by the gamma and epsilon chains, while a peripheral stalk is formed by the delta and b chains.

It localises to the cell membrane. In terms of biological role, f(1)F(0) ATP synthase produces ATP from ADP in the presence of a proton or sodium gradient. F-type ATPases consist of two structural domains, F(1) containing the extramembraneous catalytic core and F(0) containing the membrane proton channel, linked together by a central stalk and a peripheral stalk. During catalysis, ATP synthesis in the catalytic domain of F(1) is coupled via a rotary mechanism of the central stalk subunits to proton translocation. This protein is part of the stalk that links CF(0) to CF(1). It either transmits conformational changes from CF(0) to CF(1) or is implicated in proton conduction. This Wolbachia sp. subsp. Brugia malayi (strain TRS) protein is ATP synthase subunit delta.